A 460-amino-acid chain; its full sequence is Protein unc-93 homolog A (460 aa).

Helical transmembrane passes span 7-27 (ILIV…LQSL), 41-61 (SLSV…PIVI), 68-88 (WTIV…FYAS), 89-109 (WYTL…LWAA), and 139-159 (LFFL…SLIF). 2 N-linked (GlcNAc...) asparagine glycosylation sites follow: asparagine 168 and asparagine 189. Helical transmembrane passes span 203-223 (TLLG…AVFL), 292-312 (FVGY…LLFG), 321-341 (ICLF…LLLW), 345-365 (PNDF…DAIW), 390-410 (LWES…CVSV), and 412-432 (LYIL…VEYL).

Belongs to the unc-93 family.

The protein resides in the membrane. This is Protein unc-93 homolog A (unc93a) from Xenopus laevis (African clawed frog).